A 709-amino-acid polypeptide reads, in one-letter code: Ribosomal RNA large subunit methyltransferase K/L (709 aa).

Positions 43–154 (LAYRITLWTR…NGVITIAMNF (112 aa)) constitute a THUMP domain.

This sequence belongs to the methyltransferase superfamily. RlmKL family.

It localises to the cytoplasm. The enzyme catalyses guanosine(2445) in 23S rRNA + S-adenosyl-L-methionine = N(2)-methylguanosine(2445) in 23S rRNA + S-adenosyl-L-homocysteine + H(+). The catalysed reaction is guanosine(2069) in 23S rRNA + S-adenosyl-L-methionine = N(2)-methylguanosine(2069) in 23S rRNA + S-adenosyl-L-homocysteine + H(+). Functionally, specifically methylates the guanine in position 2445 (m2G2445) and the guanine in position 2069 (m7G2069) of 23S rRNA. The protein is Ribosomal RNA large subunit methyltransferase K/L of Shewanella baltica (strain OS155 / ATCC BAA-1091).